Reading from the N-terminus, the 175-residue chain is Myosin regulatory light chain 2, atrial isoform (175 aa).

Position 2 is an N-acetylalanine (Ala2). Phosphoserine occurs at positions 22 and 23. EF-hand domains lie at 32 to 67, 102 to 137, and 138 to 173; these read AQIQ…LGKV, DPEE…QADK, and FSPA…GDEK. Asp45, Asn47, Asp49, and Asp56 together coordinate Ca(2+).

Myosin is a hexamer of 2 heavy chains and 4 light chains.

This chain is Myosin regulatory light chain 2, atrial isoform (MYL7), found in Sus scrofa (Pig).